The following is a 77-amino-acid chain: MSPSHFAILFIIVISLVPLHGYANGQGFDANKLGSSVCHLGKCPKHREEVCYCCFNDRSRCYRSLYKCVAVCNRLVH.

A signal peptide spans 1-25 (MSPSHFAILFIIVISLVPLHGYANG). 4 cysteine pairs are disulfide-bonded: C38/C53, C43/C72, C51/C68, and C54/C61.

Belongs to the MEG family.

The protein is EMBRYO SURROUNDING FACTOR 1-like protein 6 (ESFL6) of Arabidopsis thaliana (Mouse-ear cress).